The following is a 461-amino-acid chain: Phosphoglucosamine mutase (461 aa).

The active-site Phosphoserine intermediate is the Ser107. Mg(2+) is bound by residues Ser107, Asp254, Asp256, and Asp258. A Phosphoserine modification is found at Ser107.

The protein belongs to the phosphohexose mutase family. Mg(2+) serves as cofactor. In terms of processing, activated by phosphorylation.

The enzyme catalyses alpha-D-glucosamine 1-phosphate = D-glucosamine 6-phosphate. Functionally, catalyzes the conversion of glucosamine-6-phosphate to glucosamine-1-phosphate. In Bifidobacterium longum (strain DJO10A), this protein is Phosphoglucosamine mutase.